Here is a 185-residue protein sequence, read N- to C-terminus: Dihydrofolate reductase 1 (185 aa).

Positions 8-185 constitute a DHFR domain; the sequence is ELVLVVAADE…QASPRPLDDL (178 aa).

Belongs to the dihydrofolate reductase family.

It catalyses the reaction (6S)-5,6,7,8-tetrahydrofolate + NADP(+) = 7,8-dihydrofolate + NADPH + H(+). Its pathway is cofactor biosynthesis; tetrahydrofolate biosynthesis; 5,6,7,8-tetrahydrofolate from 7,8-dihydrofolate: step 1/1. Key enzyme in folate metabolism. Catalyzes an essential reaction for de novo glycine and purine synthesis, and for DNA precursor synthesis. The protein is Dihydrofolate reductase 1 (folA1) of Haloarcula marismortui (strain ATCC 43049 / DSM 3752 / JCM 8966 / VKM B-1809) (Halobacterium marismortui).